Reading from the N-terminus, the 403-residue chain is RILP-like protein 1 (403 aa).

At serine 7 the chain carries Phosphoserine. The 88-residue stretch at 10–97 folds into the RH1 domain; that stretch reads AAESALEKNV…RLERMDRIEK (88 aa). Cysteine 47 bears the S-nitrosocysteine mark. A coiled-coil region spans residues 76–265; sequence ELDELRLELD…GELNQNGEEE (190 aa). The region spanning 291-356 is the RH2 domain; it reads RPRFTLQELR…PQPESGIKRL (66 aa). The segment at 329 to 348 is disordered; sequence EEENQIPQPPPIAHPRMSPQ.

The protein belongs to the RILPL family. Interacts (when S-nitrosylated) with GAPDH. Interacts with RAB8A; interaction is dependent on the phosphorylation of 'Thr-72' of RAB8A. Interacts with RAB10 and RAB12; the interaction is dependent on the phosphorylation of 'Thr-73' of RAB10, and 'Ser-105' of RAB12. In terms of processing, S-nitrosylation is required for the interaction with GAPDH.

Its subcellular location is the cytoplasm. It localises to the cytosol. It is found in the cytoskeleton. The protein resides in the microtubule organizing center. The protein localises to the centrosome. Its subcellular location is the centriole. It localises to the cilium basal body. In terms of biological role, plays a role in the regulation of cell shape and polarity. Plays a role in cellular protein transport, including protein transport away from primary cilia. Neuroprotective protein, which acts by sequestring GAPDH in the cytosol and prevent the apoptotic function of GAPDH in the nucleus. Competes with SIAH1 for binding GAPDH. Does not regulate lysosomal morphology and distribution. Binds to RAB10 following LRRK2-mediated RAB10 phosphorylation which leads to inhibition of ciliogenesis. The protein is RILP-like protein 1 (RILPL1) of Bos taurus (Bovine).